We begin with the raw amino-acid sequence, 271 residues long: 4-hydroxy-tetrahydrodipicolinate reductase (271 aa).

8–13 (GITGRM) lines the NAD(+) pocket. An NADP(+)-binding site is contributed by arginine 35. NAD(+) is bound by residues 100-102 (GST) and 124-127 (APNM). The active-site Proton donor/acceptor is the histidine 157. Histidine 158 serves as a coordination point for (S)-2,3,4,5-tetrahydrodipicolinate. Residue lysine 161 is the Proton donor of the active site. 167–168 (GT) serves as a coordination point for (S)-2,3,4,5-tetrahydrodipicolinate.

The protein belongs to the DapB family.

The protein localises to the cytoplasm. It catalyses the reaction (S)-2,3,4,5-tetrahydrodipicolinate + NAD(+) + H2O = (2S,4S)-4-hydroxy-2,3,4,5-tetrahydrodipicolinate + NADH + H(+). It carries out the reaction (S)-2,3,4,5-tetrahydrodipicolinate + NADP(+) + H2O = (2S,4S)-4-hydroxy-2,3,4,5-tetrahydrodipicolinate + NADPH + H(+). The protein operates within amino-acid biosynthesis; L-lysine biosynthesis via DAP pathway; (S)-tetrahydrodipicolinate from L-aspartate: step 4/4. Catalyzes the conversion of 4-hydroxy-tetrahydrodipicolinate (HTPA) to tetrahydrodipicolinate. This chain is 4-hydroxy-tetrahydrodipicolinate reductase, found in Myxococcus xanthus (strain DK1622).